Consider the following 37-residue polypeptide: Large ribosomal subunit protein bL36 (37 aa).

The protein belongs to the bacterial ribosomal protein bL36 family.

In Thermobifida fusca (strain YX), this protein is Large ribosomal subunit protein bL36.